We begin with the raw amino-acid sequence, 763 residues long: Transferrin receptor protein 1 (763 aa).

Residues 1–67 lie on the Cytoplasmic side of the membrane; sequence MMDQARSAFS…KPKRFNGRLC (67 aa). Positions 1–67 are mediates interaction with SH3BP4; the sequence is MMDQARSAFS…KPKRFNGRLC (67 aa). Phosphoserine occurs at positions 10 and 19. The residue at position 20 (Y20) is a Phosphotyrosine. The short motif at 20–23 is the Endocytosis signal element; that stretch reads YTRF. A Phosphothreonine modification is found at T21. Residue S24 is modified to Phosphoserine. Residues 58–61 carry the Stop-transfer sequence motif; sequence KPKR. C67 carries the S-palmitoyl cysteine lipid modification. The chain crosses the membrane as a helical; Signal-anchor for type II membrane protein span at residues 68-88; sequence FAAIALVIFFLIGFMSGYLGY. The Extracellular portion of the chain corresponds to 89-763; it reads CKRVEQKEEC…GDIWNIDNEF (675 aa). O-linked (GalNAc...) threonine glycosylation is present at T104. The 91-residue stretch at 225–315 folds into the PA domain; the sequence is SKPTEVSGKL…GTGDPYTPGF (91 aa). 2 N-linked (GlcNAc...) asparagine glycosylation sites follow: N253 and N319. The interval 572–763 is ligand-binding; the sequence is RLDTYEALTQ…GDIWNIDNEF (192 aa). Residues 649-651 carry the Cell attachment site motif; that stretch reads RGD. N-linked (GlcNAc...) asparagine glycosylation is found at N725 and N730.

This sequence belongs to the peptidase M28 family. M28B subfamily. As to quaternary structure, homodimer; disulfide-linked. Binds one transferrin molecule per subunit. Interacts with SH3BP4. Interacts with STEAP3; facilitates TFRC endocytosis in erythroid precursor cells. Post-translationally, stearoylated by ZDHHC6 which inhibits TFRC-mediated activation of the JNK pathway and promotes mitochondrial fragmentation. Stearoylation does not affect iron uptake. N- and O-glycosylated, phosphorylated and palmitoylated.

It is found in the cell membrane. Its subcellular location is the melanosome. In terms of biological role, cellular uptake of iron occurs via receptor-mediated endocytosis of ligand-occupied transferrin receptor into specialized endosomes. Endosomal acidification leads to iron release. The apotransferrin-receptor complex is then recycled to the cell surface with a return to neutral pH and the concomitant loss of affinity of apotransferrin for its receptor. Transferrin receptor is necessary for development of erythrocytes and the nervous system. Upon stimulation, positively regulates T and B cell proliferation through iron uptake. Acts as a lipid sensor that regulates mitochondrial fusion by regulating activation of the JNK pathway. When dietary levels of stearate (C18:0) are low, promotes activation of the JNK pathway, resulting in HUWE1-mediated ubiquitination and subsequent degradation of the mitofusin MFN2 and inhibition of mitochondrial fusion. When dietary levels of stearate (C18:0) are high, TFRC stearoylation inhibits activation of the JNK pathway and thus degradation of the mitofusin MFN2. Mediates uptake of NICOL1 into fibroblasts where it may regulate extracellular matrix production. This Mus musculus (Mouse) protein is Transferrin receptor protein 1 (Tfrc).